A 542-amino-acid polypeptide reads, in one-letter code: Retron Ec83 probable ATPase (542 aa).

The ATP-binding signature appears at 92 to 99 (GNNGCGKS).

Probable ATPase component of antiviral defense system retron Ec83, composed of a non-coding RNA (ncRNA), a reverse transcriptase (RT), this protein and a putative HNH endonuclease. Expression of retron Ec83 confers protection against bacteriophage T2, T4 and T6. At multiplicity of infection (MOI) of 0.02 cultures slow growth when infected with T4 but do not collapse, at MOI 2 cultures enter growth stasis. In Escherichia coli, this protein is Retron Ec83 probable ATPase.